Reading from the N-terminus, the 716-residue chain is Segment polarity protein dishevelled homolog DVL-3 (716 aa).

Residues 1 to 82 (MGETKIIYHL…RVVSWLVSAE (82 aa)) form the DIX domain. R27 is subject to Omega-N-methylarginine. 2 positions are modified to phosphoserine: S48 and S125. The tract at residues 85–235 (HPEPAPFCAD…VSRIERSSSF (151 aa)) is disordered. Residues 142 to 156 (QRERPRRRDGPEHAA) are compositionally biased toward basic and acidic residues. Over residues 175-190 (SSSTLMSSELETTSFF) the composition is skewed to low complexity. S192 carries the phosphoserine modification. Residues 199-212 (SRFSSSTEQSSASR) show a composition bias toward low complexity. An Omega-N-methylarginine modification is found at R212. Positions 213-226 (LMRRHKRRRRKQKV) are enriched in basic residues. Residues 249–321 (TVTLNMEKYN…NDDAVRVLRE (73 aa)) form the PDZ domain. At R271 the chain carries Asymmetric dimethylarginine; by PRMT1; alternate. Symmetric dimethylarginine; by PRMT7; alternate is present on residues R271 and R342. Omega-N-methylarginine; alternate is present on R342. T346 is subject to Phosphothreonine. Positions 422-496 (PESGLEVRDR…SEQCYYIFGD (75 aa)) constitute a DEP domain. A disordered region spans residues 546-691 (PYNPHPGFPE…PPGRDLASVP (146 aa)). The segment covering 565-581 (ASSQHSEGSRSSGSNRS) has biased composition (low complexity). Basic and acidic residues-rich tracts occupy residues 582–595 (GSDR…KAGD) and 604–622 (ESDH…RAPS). A Symmetric dimethylarginine; by PRMT7 modification is found at R614. 2 stretches are compositionally biased toward pro residues: residues 653-663 (YGPPGVPPLYG) and 670-682 (TPPP…PGAP). S697 is subject to Phosphoserine. R698 carries the omega-N-methylarginine; alternate modification. R698 carries the post-translational modification Dimethylated arginine; alternate. At S700 the chain carries Phosphoserine.

The protein belongs to the DSH family. As to quaternary structure, interacts (via the PDZ domain) with the C-terminal regions of VANGL1 and VANGL2. Interacts (via the region containing both the PDZ and DEP domains) with LRRFIP2; the DIX domain may inhibit this interaction. Interacts with CYLD. Interacts with CEP164 and DAB2. Interacts with DCDC2. Interacts with FOXK1 and FOXK2. Interacts with DAAM2. Ubiquitinated. Deubiquitinated by CYLD, which acts on 'Lys-63'-linked ubiquitin chains. In terms of processing, phosphorylated by CSNK1D. Post-translationally, arginine methylation may function as a switch in regulation of function in Wnt signaling. Ubiquitous.

It is found in the cytoplasm. Its function is as follows. Involved in the signal transduction pathway mediated by multiple Wnt genes. The chain is Segment polarity protein dishevelled homolog DVL-3 (Dvl3) from Mus musculus (Mouse).